Reading from the N-terminus, the 1255-residue chain is Cilia- and flagella-associated protein 337 B (1255 aa).

The region spanning 87 to 122 is the EF-hand domain; the sequence is KLVRCLTNLFEEIDLNGNGILEWDEFTNYVIEKATV. Residues Asp100, Asn102, Asn104, and Glu111 each coordinate Ca(2+). WD repeat units lie at residues 228–269, 282–322, 326–365, 368–407, 410–449, 496–536, 538–577, 580–624, 625–664, 669–708, 769–808, and 844–883; these read DLKT…WVLA, EFKN…KELE, AHTEVIMDMITMPKLQFLASGALDGLLILWDTINNKKKRV, EHTRGITSLSFNEALILLFSAGFDHEVCVWNPYIDNLIYK, GHSSPLLGVKVIEGTSQVITLDSDGNVRVTDIKKFSNVQC, VDDY…KIFS, VTQGEITCFTLDSLKKRMLIGDSMGQIGIYNTYNGAMIKA, KHSA…RTLE, LKDVMITSLGFDPITKMIIVATNTGITSFYESDTGKQNGS, TQYEEITSLNLIKNLPYIITTTTNGKINFIALPPLLFKFQ, QQNLSISNCIYCDQTKCLFLSDDKGFIKCFDISQILTILE, and AHYEMIKSLEYIQEENLLITTAYDKKVKLWDSKTGNLIDQ. Disordered stretches follow at residues 941-988 and 1140-1160; these read IKSL…NFNP and QQQVQNQQTEPSSNRSHQQPG. A compositionally biased stretch (low complexity) spans 953–969; the sequence is TQESSTQEQEAAQQPQQ. Over residues 1148-1160 the composition is skewed to polar residues; it reads TEPSSNRSHQQPG.

The protein belongs to the CFAP337 family. Associates with components of the nexin-dynein regulatory complex (N-DRC) and the CFAP184:CFAP263 complex.

It is found in the cell projection. Its subcellular location is the cilium. Associates with components of the nexin-dynein regulatory complex (N-DRC), a key regulator of ciliary/flagellar motility, and might act as an inner dynein arm (IDA) hub or linkage. This is Cilia- and flagella-associated protein 337 B from Tetrahymena thermophila (strain SB210).